An 898-amino-acid polypeptide reads, in one-letter code: Sodium/hydrogen exchanger 5 (898 aa).

At 1 to 3 the chain is on the cytoplasmic side; it reads MLR. Residues 4-24 traverse the membrane as a helical segment; that stretch reads VALLLLPGLPLAGVGATEEPT. Over 25-47 the chain is Extracellular; that stretch reads QEPGPLGEPPGLALFRWQWHEVE. Residues 48-68 traverse the membrane as a helical segment; sequence APYLVALWILVASLAKIVFHL. Topologically, residues 69–75 are cytoplasmic; the sequence is SRKVTSL. The chain crosses the membrane as a helical span at residues 76–96; that stretch reads VPESCLLILLGLALGGIVLAV. Over 97–136 the chain is Extracellular; the sequence is AKKAEYQLEPGTFFLFLLPPIVLDSGYFMPSRLFFDNLGA. Residues 137-157 traverse the membrane as a helical segment; it reads ILTYAVVGTLWNAFTTGVALW. Over 158-175 the chain is Cytoplasmic; sequence GLQQAGLVAPRVQAGLLD. Residues 176 to 196 form a helical membrane-spanning segment; it reads FLLFGSLISAVDPVAVLAVFE. Over 197–202 the chain is Extracellular; sequence EVHVNE. A glycan (N-linked (GlcNAc...) asparagine) is linked at asparagine 201. The chain crosses the membrane as a helical span at residues 203-223; it reads TLFIIVFGESLLNDAVTVVLY. Residues 224–248 lie on the Cytoplasmic side of the membrane; the sequence is KVCNSFVEMGSANVQATDYLKGVAS. Residues 249 to 269 form a helical membrane-spanning segment; sequence LFVVSLGGAAVGLVFAFLLAL. The Extracellular segment spans residues 270-278; the sequence is TTRFTKRVR. The helical transmembrane segment at 279–299 threads the bilayer; sequence IIEPLLVFLLAYAAYLTAEMA. Topologically, residues 300–333 are cytoplasmic; sequence SLSAILAVTMCGLGCKKYVEANISHKSRTAVKYT. Residues 334 to 354 traverse the membrane as a helical segment; it reads MKTLASSAETVIFMLLGISAV. The Extracellular segment spans residues 355–362; sequence DSSKWAWD. A helical transmembrane segment spans residues 363–383; it reads SGLVLGTLFFILFFRALGVVL. Residues 384–400 lie on the Cytoplasmic side of the membrane; sequence QTWVLNQFRLVPLDKID. The helical transmembrane segment at 401–421 threads the bilayer; the sequence is QVVMSYGGLRGAVAFALVILL. Topologically, residues 422–430 are extracellular; it reads DRTKVPAKD. The chain crosses the membrane as a helical span at residues 431–451; sequence YFVATTIVVVFFTVIVQGLTI. Topologically, residues 452-898 are cytoplasmic; sequence KPLVKWLRVK…CIQFNRGGRL (447 aa). 2 disordered regions span residues 660–692 and 801–888; these read TKSK…RDLG and ESLA…NSHW. Positions 662-674 are enriched in basic residues; it reads SKPRPRKTGHKKK. The segment covering 856-867 has biased composition (polar residues); it reads ESSADIPQQQEL.

It belongs to the monovalent cation:proton antiporter 1 (CPA1) transporter (TC 2.A.36) family. Interacts with CHP1 and CHP2. Interacts with ARRB2; facilitates the endocytosis of SLC9A5 from the plasma membrane. Interacts with RACK1; this interaction positively regulates SLC9A5 activity and promotes SLC9A5 localization to focal adhesions. Interacts with SCAMP2; this interaction regulates SLC9A5 cell-surface targeting and SLC9A5 activity. In terms of processing, phosphorylated by PRKAA2; promotes its accumulation at the cell surface. Phosphorylated by CSNK2A1 in a manner favoring its beta-arrestin binding and endocytosis. Highly expressed in brain. Strongly expressed in the dentate gyrus.

The protein resides in the cell membrane. The protein localises to the recycling endosome membrane. It is found in the cell projection. It localises to the dendritic spine membrane. Its subcellular location is the synaptic cell membrane. The protein resides in the cell junction. The protein localises to the focal adhesion. The catalysed reaction is Na(+)(in) + H(+)(out) = Na(+)(out) + H(+)(in). Functionally, plasma membrane Na(+)/H(+) antiporter. Mediates the electroneutral exchange of intracellular H(+) ions for extracellular Na(+) in 1:1 stoichiometry. Responsible for regulating intracellular pH homeostasis, in particular in neural tissues. Acts as a negative regulator of dendritic spine growth. Plays a role in postsynaptic remodeling and signaling. Can also contribute to organellar pH regulation, with consequences for receptor tyrosine kinase trafficking. This is Sodium/hydrogen exchanger 5 (Slc9a5) from Rattus norvegicus (Rat).